The sequence spans 153 residues: Protein ripply2.2 (153 aa).

The short motif at 58 to 61 is the WRPW motif; required for transcriptional repression and interaction with tle4 element; it reads WRPW. The interval 93–128 is ripply homology domain; the sequence is HPVRLFWPKSKLLDNTYQEAADLLRNFPVQATISLY. The tract at residues 127 to 153 is disordered; that stretch reads LYNDSESDTDNEEDSSEEEQDSGFESE. Residues 131–153 are compositionally biased toward acidic residues; that stretch reads SESDTDNEEDSSEEEQDSGFESE.

It belongs to the ripply family. In terms of assembly, interacts with tle4 and tbx6, and mediates interaction between these proteins. Expressed in the presomitic mesoderm (PSM) in the anterior halves of somitomeres S-I, S-II and S-III.

It localises to the nucleus. Its function is as follows. Required during somitogenesis for the formation of somite boundaries. Represses the expression of genes involved in somite segmentation by acting with the corepressor tle4 to down-regulate the transcriptional activity of tbx6. May act by regulating the activity of tle4. Represses transcription of delta2, thy1 and ripply2.2/bowline itself. The protein is Protein ripply2.2 (ripply2.2) of Xenopus laevis (African clawed frog).